Reading from the N-terminus, the 361-residue chain is Peptide chain release factor 1 (361 aa).

N5-methylglutamine is present on glutamine 236. The disordered stretch occupies residues 286 to 306 (AADSQRAEARKGQVGSGDRSE).

Belongs to the prokaryotic/mitochondrial release factor family. Methylated by PrmC. Methylation increases the termination efficiency of RF1.

Its subcellular location is the cytoplasm. Its function is as follows. Peptide chain release factor 1 directs the termination of translation in response to the peptide chain termination codons UAG and UAA. The chain is Peptide chain release factor 1 from Magnetococcus marinus (strain ATCC BAA-1437 / JCM 17883 / MC-1).